The following is a 277-amino-acid chain: Adaptin ear-binding coat-associated protein 1 (277 aa).

Residues 164–277 are disordered; it reads GNITAKKGGT…APQPSNWVQF (114 aa). A compositionally biased stretch (pro residues) spans 187–201; it reads LPPPPGGKVTIPPPS. Thr-211 is subject to Phosphothreonine. The span at 222–234 shows a compositional bias: low complexity; that stretch reads SNDSDILLDLDSP. The segment covering 235–245 has biased composition (pro residues); that stretch reads APVPTSAPAPA. Short sequence motifs (WXXF motif) lie at residues 254 to 257 and 274 to 277; these read WGDF and WVQF. A compositionally biased stretch (polar residues) spans 258-277; it reads STASSSVPNQAPQPSNWVQF.

Belongs to the NECAP family. In terms of assembly, interacts with AP1G1 and AP2A1 components of the adapter protein complexes AP-1 and AP-2. Interacts with the GAE domain proteins GGA1, GGA2 and GGA3. Interacts with AP2A2. As to expression, expressed predominantly in brain (at protein level).

It is found in the cytoplasmic vesicle. The protein resides in the clathrin-coated vesicle membrane. Its subcellular location is the cell membrane. Functionally, involved in endocytosis. The polypeptide is Adaptin ear-binding coat-associated protein 1 (Necap1) (Rattus norvegicus (Rat)).